A 381-amino-acid polypeptide reads, in one-letter code: 3-dehydroquinate synthase (381 aa).

NAD(+) contacts are provided by residues 81–86, 115–119, 139–140, K152, and K161; these read EGESSK, GVIGD, and TS. Residues E194, H256, and H274 each contribute to the Zn(2+) site.

Belongs to the sugar phosphate cyclases superfamily. Dehydroquinate synthase family. The cofactor is Co(2+). Zn(2+) is required as a cofactor. NAD(+) serves as cofactor.

The protein localises to the cytoplasm. The enzyme catalyses 7-phospho-2-dehydro-3-deoxy-D-arabino-heptonate = 3-dehydroquinate + phosphate. It functions in the pathway metabolic intermediate biosynthesis; chorismate biosynthesis; chorismate from D-erythrose 4-phosphate and phosphoenolpyruvate: step 2/7. Catalyzes the conversion of 3-deoxy-D-arabino-heptulosonate 7-phosphate (DAHP) to dehydroquinate (DHQ). The sequence is that of 3-dehydroquinate synthase from Rhodopseudomonas palustris (strain ATCC BAA-98 / CGA009).